The following is a 159-amino-acid chain: Putative ribosomal RNA large subunit methyltransferase H (159 aa).

S-adenosyl-L-methionine contacts are provided by residues Leu-76, Gly-108, and 127–132 (FSKMTF).

It belongs to the RNA methyltransferase RlmH family.

The protein resides in the cytoplasm. The enzyme catalyses pseudouridine(1915) in 23S rRNA + S-adenosyl-L-methionine = N(3)-methylpseudouridine(1915) in 23S rRNA + S-adenosyl-L-homocysteine + H(+). Functionally, specifically methylates the pseudouridine at position 1915 (m3Psi1915) in 23S rRNA. In Methanococcus maripaludis (strain DSM 14266 / JCM 13030 / NBRC 101832 / S2 / LL), this protein is Putative ribosomal RNA large subunit methyltransferase H.